A 314-amino-acid chain; its full sequence is Deoxymugineic acid synthase 1-A (314 aa).

Positions 1–21 are disordered; sequence MGAGDKTAAGMPRIGMGTAVQ. Asp44 lines the NADP(+) pocket. Tyr49 acts as the Proton donor in catalysis. Position 112 (His112) interacts with substrate. NADP(+) contacts are provided by residues 158–159, Gln180, 258–266, and 273–281; these read AN, FDEARMREN, and ELTEEEHRR.

Belongs to the aldo/keto reductase family. Mostly expressed in root tissues, observed in mesocotyl and embryonic roots, seedling roots, crown and seedling leafes, mature bracts, anthers, pistil, caryopsis and embryos.

It carries out the reaction 2'-deoxymugineate + NAD(+) = 3''-deamino-3''-oxonicotianamine + NADH + H(+). The enzyme catalyses 2'-deoxymugineate + NADP(+) = 3''-deamino-3''-oxonicotianamine + NADPH + H(+). It functions in the pathway siderophore biosynthesis. Functionally, catalyzes the reduction of a 3''-keto intermediate during the biosynthesis of 2'-deoxymugineic acid (DMA) from L-Met. Involved in the formation of phytosiderophores (MAs) belonging to the mugineic acid family and required to acquire iron. This chain is Deoxymugineic acid synthase 1-A, found in Triticum aestivum (Wheat).